A 246-amino-acid polypeptide reads, in one-letter code: Cell division protein ZapD (246 aa).

The protein belongs to the ZapD family. In terms of assembly, interacts with FtsZ.

It localises to the cytoplasm. Functionally, cell division factor that enhances FtsZ-ring assembly. Directly interacts with FtsZ and promotes bundling of FtsZ protofilaments, with a reduction in FtsZ GTPase activity. The sequence is that of Cell division protein ZapD from Vibrio atlanticus (strain LGP32) (Vibrio splendidus (strain Mel32)).